Reading from the N-terminus, the 163-residue chain is Transcription antitermination protein NusB (163 aa).

Belongs to the NusB family.

Functionally, involved in transcription antitermination. Required for transcription of ribosomal RNA (rRNA) genes. Binds specifically to the boxA antiterminator sequence of the ribosomal RNA (rrn) operons. The protein is Transcription antitermination protein NusB of Granulibacter bethesdensis (strain ATCC BAA-1260 / CGDNIH1).